The following is a 217-amino-acid chain: Peptide methionine sulfoxide reductase MsrA (217 aa).

Cysteine 54 is an active-site residue.

The protein belongs to the MsrA Met sulfoxide reductase family.

It carries out the reaction L-methionyl-[protein] + [thioredoxin]-disulfide + H2O = L-methionyl-(S)-S-oxide-[protein] + [thioredoxin]-dithiol. The catalysed reaction is [thioredoxin]-disulfide + L-methionine + H2O = L-methionine (S)-S-oxide + [thioredoxin]-dithiol. Has an important function as a repair enzyme for proteins that have been inactivated by oxidation. Catalyzes the reversible oxidation-reduction of methionine sulfoxide in proteins to methionine. This chain is Peptide methionine sulfoxide reductase MsrA, found in Maricaulis maris (strain MCS10) (Caulobacter maris).